Reading from the N-terminus, the 419-residue chain is S-adenosylmethionine synthase (419 aa).

H14 lines the ATP pocket. D16 serves as a coordination point for Mg(2+). E42 is a K(+) binding site. E55 and Q98 together coordinate L-methionine. The flexible loop stretch occupies residues 98–108 (QSQDIYQGVDR). Residues 164-166 (DSK), 242-243 (KF), D251, 257-258 (RK), A274, and K278 contribute to the ATP site. Residue D251 coordinates L-methionine. Residue K282 participates in L-methionine binding.

The protein belongs to the AdoMet synthase family. As to quaternary structure, homotetramer; dimer of dimers. Requires Mg(2+) as cofactor. K(+) serves as cofactor.

It is found in the cytoplasm. It carries out the reaction L-methionine + ATP + H2O = S-adenosyl-L-methionine + phosphate + diphosphate. It functions in the pathway amino-acid biosynthesis; S-adenosyl-L-methionine biosynthesis; S-adenosyl-L-methionine from L-methionine: step 1/1. Its function is as follows. Catalyzes the formation of S-adenosylmethionine (AdoMet) from methionine and ATP. The overall synthetic reaction is composed of two sequential steps, AdoMet formation and the subsequent tripolyphosphate hydrolysis which occurs prior to release of AdoMet from the enzyme. In Christiangramia forsetii (strain DSM 17595 / CGMCC 1.15422 / KT0803) (Gramella forsetii), this protein is S-adenosylmethionine synthase.